The chain runs to 265 residues: Small ribosomal subunit protein uS5 (265 aa).

The span at 1–15 (MADTQPAQEAPAADA) shows a compositional bias: low complexity. Positions 1–44 (MADTQPAQEAPAADAPRAERNFGRGRGGRGGRGRGRGGPGEEKE) are disordered. The segment covering 26-35 (RGGRGGRGRG) has biased composition (basic residues). Residues 88–151 (LHDEMMKIYP…IAAKLNIVPV (64 aa)) form the S5 DRBM domain. The segment at 245–265 (TEPSRDPTDEHGELLAEMTTA) is disordered. Positions 246 to 258 (EPSRDPTDEHGEL) are enriched in basic and acidic residues.

This sequence belongs to the universal ribosomal protein uS5 family.

Functionally, component of the ribosome, a large ribonucleoprotein complex responsible for the synthesis of proteins in the cell. The small ribosomal subunit (SSU) binds messenger RNAs (mRNAs) and translates the encoded message by selecting cognate aminoacyl-transfer RNA (tRNA) molecules. The large subunit (LSU) contains the ribosomal catalytic site termed the peptidyl transferase center (PTC), which catalyzes the formation of peptide bonds, thereby polymerizing the amino acids delivered by tRNAs into a polypeptide chain. The nascent polypeptides leave the ribosome through a tunnel in the LSU and interact with protein factors that function in enzymatic processing, targeting, and the membrane insertion of nascent chains at the exit of the ribosomal tunnel. Plays a role in the assembly and function of the 40S ribosomal subunit. Mutations in this protein affects the control of translational fidelity. Involved in nucleolar processing of pre-18S ribosomal RNA and ribosome assembly. In Leishmania amazonensis, this protein is Small ribosomal subunit protein uS5.